The primary structure comprises 288 residues: 4-diphosphocytidyl-2-C-methyl-D-erythritol kinase (288 aa).

Residue lysine 8 is part of the active site. Proline 92–threonine 102 serves as a coordination point for ATP. Aspartate 134 is an active-site residue.

The protein belongs to the GHMP kinase family. IspE subfamily.

It catalyses the reaction 4-CDP-2-C-methyl-D-erythritol + ATP = 4-CDP-2-C-methyl-D-erythritol 2-phosphate + ADP + H(+). Its pathway is isoprenoid biosynthesis; isopentenyl diphosphate biosynthesis via DXP pathway; isopentenyl diphosphate from 1-deoxy-D-xylulose 5-phosphate: step 3/6. Functionally, catalyzes the phosphorylation of the position 2 hydroxy group of 4-diphosphocytidyl-2C-methyl-D-erythritol. This Clostridium perfringens (strain ATCC 13124 / DSM 756 / JCM 1290 / NCIMB 6125 / NCTC 8237 / Type A) protein is 4-diphosphocytidyl-2-C-methyl-D-erythritol kinase.